The following is a 445-amino-acid chain: Phosphoglucosamine mutase (445 aa).

Ser-102 (phosphoserine intermediate) is an active-site residue. Positions 102, 241, 243, and 245 each coordinate Mg(2+). A Phosphoserine modification is found at Ser-102.

The protein belongs to the phosphohexose mutase family. The cofactor is Mg(2+). Activated by phosphorylation.

It catalyses the reaction alpha-D-glucosamine 1-phosphate = D-glucosamine 6-phosphate. In terms of biological role, catalyzes the conversion of glucosamine-6-phosphate to glucosamine-1-phosphate. The protein is Phosphoglucosamine mutase of Cronobacter sakazakii (strain ATCC BAA-894) (Enterobacter sakazakii).